Reading from the N-terminus, the 28-residue chain is M-ectatotoxin-Eb2c (28 aa).

In terms of tissue distribution, expressed by the venom gland.

The protein resides in the secreted. Antimicrobial peptide active against Gram-negative bacterium E.coli MH1 (MIC=3.5 uM) and P.aeruginosa PAO1 (MIC=10 uM) and against Gram-positive bacterium A.globiformis VKM Ac-1112 (MIC=1.25 uM). The protein is M-ectatotoxin-Eb2c of Ectatomma brunneum (Ant).